The primary structure comprises 308 residues: Ribosomal RNA small subunit methyltransferase H (308 aa).

S-adenosyl-L-methionine-binding positions include 32–34 (AGH), aspartate 51, phenylalanine 78, aspartate 99, and glutamine 106.

The protein belongs to the methyltransferase superfamily. RsmH family.

The protein resides in the cytoplasm. It catalyses the reaction cytidine(1402) in 16S rRNA + S-adenosyl-L-methionine = N(4)-methylcytidine(1402) in 16S rRNA + S-adenosyl-L-homocysteine + H(+). Its function is as follows. Specifically methylates the N4 position of cytidine in position 1402 (C1402) of 16S rRNA. In Mesoplasma florum (strain ATCC 33453 / NBRC 100688 / NCTC 11704 / L1) (Acholeplasma florum), this protein is Ribosomal RNA small subunit methyltransferase H.